A 301-amino-acid polypeptide reads, in one-letter code: NADH-cytochrome b5 reductase 2 (301 aa).

The helical transmembrane segment at 14–30 (FLVPFAGATALSIGLAL) threads the bilayer. Residues 51–155 (NEWVDLKLSK…KGPIVKWKWE (105 aa)) form the FAD-binding FR-type domain. 158-193 (QFKSIALIGGGTGITPLYQLLHQITSNPKDNTKVNL) is a binding site for FAD.

Belongs to the flavoprotein pyridine nucleotide cytochrome reductase family. It depends on FAD as a cofactor.

It localises to the mitochondrion outer membrane. The enzyme catalyses 2 Fe(III)-[cytochrome b5] + NADH = 2 Fe(II)-[cytochrome b5] + NAD(+) + H(+). May mediate the reduction of outer membrane cytochrome b5. The protein is NADH-cytochrome b5 reductase 2 (MCR1) of Candida albicans (strain SC5314 / ATCC MYA-2876) (Yeast).